Reading from the N-terminus, the 230-residue chain is Cytidylate kinase (230 aa).

Residue 12–20 (GPSGTGKST) participates in ATP binding.

Belongs to the cytidylate kinase family. Type 1 subfamily.

The protein localises to the cytoplasm. The catalysed reaction is CMP + ATP = CDP + ADP. It catalyses the reaction dCMP + ATP = dCDP + ADP. The polypeptide is Cytidylate kinase (Corynebacterium glutamicum (strain ATCC 13032 / DSM 20300 / JCM 1318 / BCRC 11384 / CCUG 27702 / LMG 3730 / NBRC 12168 / NCIMB 10025 / NRRL B-2784 / 534)).